The following is a 192-amino-acid chain: Xanthine phosphoribosyltransferase (192 aa).

2 residues coordinate xanthine: L20 and N27. 128 to 132 lines the 5-phospho-alpha-D-ribose 1-diphosphate pocket; it reads ANGQA. K156 is a binding site for xanthine.

This sequence belongs to the purine/pyrimidine phosphoribosyltransferase family. Xpt subfamily. Homodimer.

It is found in the cytoplasm. It carries out the reaction XMP + diphosphate = xanthine + 5-phospho-alpha-D-ribose 1-diphosphate. The protein operates within purine metabolism; XMP biosynthesis via salvage pathway; XMP from xanthine: step 1/1. Functionally, converts the preformed base xanthine, a product of nucleic acid breakdown, to xanthosine 5'-monophosphate (XMP), so it can be reused for RNA or DNA synthesis. This Listeria monocytogenes serotype 4b (strain F2365) protein is Xanthine phosphoribosyltransferase.